We begin with the raw amino-acid sequence, 227 residues long: Cytochrome c oxidase subunit 2 (227 aa).

Over methionine 1–serine 14 the chain is Mitochondrial intermembrane. The helical transmembrane segment at proline 15–methionine 45 threads the bilayer. The Mitochondrial matrix segment spans residues leucine 46–glutamine 59. The chain crosses the membrane as a helical span at residues glutamate 60–methionine 87. Over aspartate 88–isoleucine 227 the chain is Mitochondrial intermembrane. Residues histidine 161, cysteine 196, glutamate 198, cysteine 200, histidine 204, and methionine 207 each contribute to the Cu cation site. Glutamate 198 serves as a coordination point for Mg(2+).

Belongs to the cytochrome c oxidase subunit 2 family. Component of the cytochrome c oxidase (complex IV, CIV), a multisubunit enzyme composed of 14 subunits. The complex is composed of a catalytic core of 3 subunits MT-CO1, MT-CO2 and MT-CO3, encoded in the mitochondrial DNA, and 11 supernumerary subunits COX4I, COX5A, COX5B, COX6A, COX6B, COX6C, COX7A, COX7B, COX7C, COX8 and NDUFA4, which are encoded in the nuclear genome. The complex exists as a monomer or a dimer and forms supercomplexes (SCs) in the inner mitochondrial membrane with NADH-ubiquinone oxidoreductase (complex I, CI) and ubiquinol-cytochrome c oxidoreductase (cytochrome b-c1 complex, complex III, CIII), resulting in different assemblies (supercomplex SCI(1)III(2)IV(1) and megacomplex MCI(2)III(2)IV(2)). Found in a complex with TMEM177, COA6, COX18, COX20, SCO1 and SCO2. Interacts with TMEM177 in a COX20-dependent manner. Interacts with COX20. Interacts with COX16. The cofactor is Cu cation.

It localises to the mitochondrion inner membrane. It catalyses the reaction 4 Fe(II)-[cytochrome c] + O2 + 8 H(+)(in) = 4 Fe(III)-[cytochrome c] + 2 H2O + 4 H(+)(out). Its function is as follows. Component of the cytochrome c oxidase, the last enzyme in the mitochondrial electron transport chain which drives oxidative phosphorylation. The respiratory chain contains 3 multisubunit complexes succinate dehydrogenase (complex II, CII), ubiquinol-cytochrome c oxidoreductase (cytochrome b-c1 complex, complex III, CIII) and cytochrome c oxidase (complex IV, CIV), that cooperate to transfer electrons derived from NADH and succinate to molecular oxygen, creating an electrochemical gradient over the inner membrane that drives transmembrane transport and the ATP synthase. Cytochrome c oxidase is the component of the respiratory chain that catalyzes the reduction of oxygen to water. Electrons originating from reduced cytochrome c in the intermembrane space (IMS) are transferred via the dinuclear copper A center (CU(A)) of subunit 2 and heme A of subunit 1 to the active site in subunit 1, a binuclear center (BNC) formed by heme A3 and copper B (CU(B)). The BNC reduces molecular oxygen to 2 water molecules using 4 electrons from cytochrome c in the IMS and 4 protons from the mitochondrial matrix. The protein is Cytochrome c oxidase subunit 2 (MT-CO2) of Apodemus mystacinus (Broad-toothed field mouse).